Here is a 236-residue protein sequence, read N- to C-terminus: Sorulation-regulated protein 2 (236 aa).

An N-terminal signal peptide occupies residues 1–20 (MLGLYLSSLFFAFFMAQVFA). N155, N160, N203, and N212 each carry an N-linked (GlcNAc...) asparagine glycan. N212 carries GPI-anchor amidated asparagine lipidation. The propeptide at 213–236 (SSSSLMPSMGILSFLFGLYLLLHP) is removed in mature form.

In terms of processing, the GPI-anchor is attached to the protein in the endoplasmic reticulum and serves to target the protein to the cell surface. There, the glucosamine-inositol phospholipid moiety is cleaved off and the GPI-modified mannoprotein is covalently attached via its lipidless GPI glycan remnant to the 1,6-beta-glucan of the outer cell wall layer. N-glycosylated.

Its subcellular location is the spore wall. It is found in the secreted. It localises to the cell wall. The protein resides in the membrane. The protein is Sorulation-regulated protein 2 of Saccharomyces cerevisiae (strain ATCC 204508 / S288c) (Baker's yeast).